The sequence spans 414 residues: Gamma-glutamyl phosphate reductase (414 aa).

Belongs to the gamma-glutamyl phosphate reductase family.

It is found in the cytoplasm. It carries out the reaction L-glutamate 5-semialdehyde + phosphate + NADP(+) = L-glutamyl 5-phosphate + NADPH + H(+). Its pathway is amino-acid biosynthesis; L-proline biosynthesis; L-glutamate 5-semialdehyde from L-glutamate: step 2/2. Catalyzes the NADPH-dependent reduction of L-glutamate 5-phosphate into L-glutamate 5-semialdehyde and phosphate. The product spontaneously undergoes cyclization to form 1-pyrroline-5-carboxylate. The polypeptide is Gamma-glutamyl phosphate reductase (Xanthomonas oryzae pv. oryzae (strain KACC10331 / KXO85)).